The following is a 207-amino-acid chain: Histone H1-like protein HC2 (207 aa).

Composition is skewed to basic residues over residues 1-50 (MLGV…KTVA) and 59-72 (PAAK…APVR). The interval 1 to 72 (MLGVQKKRST…KTAAKKAPVR (72 aa)) is disordered. 3 tandem repeats follow at residues 35 to 58 (VRKV…AARK), 71 to 94 (VRKV…AARK), and 113 to 136 (VRKV…AARK). The tract at residues 35-136 (VRKVAAKKTV…VAKKAVAARK (102 aa)) is 3 X 24 AA repeats of V-R-K-V-A-A-K-K-T-V-A-R-K-T-V-A-K-K-A-V-A-A-R-K.

Belongs to the histone H1/H5 family. HCT subfamily.

Might have a role in establishing the nucleoid structure of elementary bodies. This is Histone H1-like protein HC2 (hctB) from Chlamydia muridarum (strain MoPn / Nigg).